A 329-amino-acid polypeptide reads, in one-letter code: Sialic acid-binding periplasmic protein SiaP (329 aa).

The first 23 residues, 1-23, serve as a signal peptide directing secretion; that stretch reads MMKLTKLFLATAISLGVSSAVLA. The N-acetyl-beta-neuraminate site is built by N33, D72, E90, R150, R170, and N210.

This sequence belongs to the bacterial solute-binding protein 7 family. As to quaternary structure, the complex comprises the extracytoplasmic solute receptor protein SiaP, and the fused transmembrane protein SiaT.

The protein localises to the periplasm. In terms of biological role, part of the tripartite ATP-independent periplasmic (TRAP) transport system SiaPT involved in the uptake of sialic acid (N-acetyl-beta-neuraminate). This protein specifically binds sialic acid with high affinity. N-Acetylneuraminate (sialic acid) can then be incorporated into the lipooligosaccharides (LOS) as a terminal non-reducing sugar, protecting the bacterium from complement-mediated killing by normal human serum. The chain is Sialic acid-binding periplasmic protein SiaP (siaP) from Haemophilus influenzae (strain ATCC 51907 / DSM 11121 / KW20 / Rd).